Here is a 153-residue protein sequence, read N- to C-terminus: Small ribosomal subunit protein uS19 (153 aa).

This sequence belongs to the universal ribosomal protein uS19 family.

This chain is Small ribosomal subunit protein uS19 (RPS15), found in Elaeis oleifera (American oil palm).